Consider the following 95-residue polypeptide: MSVLTFLKPRGSGSVARERLQLILAHERVENGRPDLIITLREEILNVIAKHVTVERDKVQIKLERGEGVSTLGVDIEFPVDAVIKPKAKTKRAIA.

This sequence belongs to the MinE family.

Functionally, prevents the cell division inhibition by proteins MinC and MinD at internal division sites while permitting inhibition at polar sites. This ensures cell division at the proper site by restricting the formation of a division septum at the midpoint of the long axis of the cell. The polypeptide is Cell division topological specificity factor (Methylorubrum extorquens (strain PA1) (Methylobacterium extorquens)).